The chain runs to 426 residues: Enolase (426 aa).

Position 163 (Gln163) interacts with (2R)-2-phosphoglycerate. Catalysis depends on Glu205, which acts as the Proton donor. Mg(2+)-binding residues include Asp242, Glu283, and Asp310. Lys335, Arg364, Ser365, and Lys386 together coordinate (2R)-2-phosphoglycerate. Lys335 serves as the catalytic Proton acceptor.

This sequence belongs to the enolase family. Mg(2+) serves as cofactor.

The protein localises to the cytoplasm. The protein resides in the secreted. It is found in the cell surface. It catalyses the reaction (2R)-2-phosphoglycerate = phosphoenolpyruvate + H2O. It participates in carbohydrate degradation; glycolysis; pyruvate from D-glyceraldehyde 3-phosphate: step 4/5. Functionally, catalyzes the reversible conversion of 2-phosphoglycerate (2-PG) into phosphoenolpyruvate (PEP). It is essential for the degradation of carbohydrates via glycolysis. The sequence is that of Enolase from Aquifex aeolicus (strain VF5).